The following is a 202-amino-acid chain: Myosin regulatory light chain 10 (202 aa).

Residues 1-21 (MGQSSLDHGVQGPVAGTGDFG) are disordered. 3 EF-hand domains span residues 60 to 95 (SQIQ…LGRI), 130 to 165 (DPEE…QADR), and 166 to 201 (FSEE…GEEK). Residues Asp73, Asn75, Asp77, and Asp84 each coordinate Ca(2+).

As to quaternary structure, myosin is a hexamer of 2 heavy chains and 4 light chains. In terms of tissue distribution, specifically expressed in precursor B- and T-lymphocytes.

The polypeptide is Myosin regulatory light chain 10 (Myl10) (Mus musculus (Mouse)).